The sequence spans 1318 residues: Ubiquitin carboxyl-terminal hydrolase 19 (1318 aa).

The tract at residues 1–109 is disordered; sequence MSGGASATGP…GACEDPHDLL (109 aa). Residues 1–1291 are Cytoplasmic-facing; the sequence is MSGGASATGP…TTPDEGCLRY (1291 aa). The span at 28–44 shows a compositional bias: basic and acidic residues; sequence DRANQESKDGDPRKETG. Positions 83-94 are enriched in polar residues; the sequence is PSSSGSASTPQE. Residues 95 to 107 are compositionally biased toward basic and acidic residues; the sequence is EQTKEGACEDPHD. One can recognise a CS 1 domain in the interval 113–202; sequence TPELLLDWRQ…VPMLTWPSLL (90 aa). Positions 234–255 are disordered; that stretch reads KAVPPGNDPVSPAMVRSRNPGK. Phosphoserine is present on Ser244. The CS 2 domain occupies 282–384; the sequence is LAFVKNDSYE…RQSQRWGGLE (103 aa). The tract at residues 390 to 479 is disordered; the sequence is VGGAKVAVPT…PMPHSPVSGD (90 aa). 2 stretches are compositionally biased toward basic and acidic residues: residues 420–436 and 447–457; these read EEAR…RSED and PMEHVTPKPET. Positions 497 to 1214 constitute a USP domain; it reads TGLVNLGNTC…YAYVLFYRRR (718 aa). The active-site Nucleophile is the Cys506. Positions 791, 794, 808, 811, 817, 821, 829, and 833 each coordinate Zn(2+). The MYND-type zinc finger occupies 791–833; the sequence is CAACQRKQQSEDEKLKRCTRCYRVGYCNQLCQKTHWPDHKGLC. Catalysis depends on His1165, which acts as the Proton acceptor. Basic and acidic residues predominate over residues 1218–1232; sequence VERPPRAGHSEHHPD. Residues 1218-1239 form a disordered region; the sequence is VERPPRAGHSEHHPDLGPAAEA. A helical membrane pass occupies residues 1292–1312; it reads FVLGTVAALVALVLNVFYPLV. Residues 1313 to 1318 are Lumenal-facing; that stretch reads SQSRWR.

This sequence belongs to the peptidase C19 family. Interacts with RNF123. Interacts with BIRC2/c-IAP1, BIRC3/c-IAP2 and XIAP/BIRC4. Interacts with HIF1A (via N-terminus). Interacts (via N-terminus) with HSP90AA1; this interaction activates the deubiquitinase activity of USP19.

It is found in the endoplasmic reticulum membrane. The catalysed reaction is Thiol-dependent hydrolysis of ester, thioester, amide, peptide and isopeptide bonds formed by the C-terminal Gly of ubiquitin (a 76-residue protein attached to proteins as an intracellular targeting signal).. Its function is as follows. Deubiquitinating enzyme that regulates the degradation of various proteins by removing ubiquitin moieties, thereby preventing their proteasomal degradation. Stabilizes RNF123, which promotes CDKN1B degradation and contributes to cell proliferation. Decreases the levels of ubiquitinated proteins during skeletal muscle formation and acts to repress myogenesis. Modulates transcription of major myofibrillar proteins. Also involved in turnover of endoplasmic-reticulum-associated degradation (ERAD) substrates. Mechanistically, deubiquitinates and thereby stabilizes several E3 ligases involved in the ERAD pathway including SYVN1 or MARCHF6. Regulates the stability of other E3 ligases including BIRC2/c-IAP1 and BIRC3/c-IAP2 by preventing their ubiquitination. Required for cells to mount an appropriate response to hypoxia by rescuing HIF1A from degradation in a non-catalytic manner and by mediating the deubiquitination of FUNDC1. Attenuates mitochondrial damage and ferroptosis by targeting and stabilizing NADPH oxidase 4/NOX4. Negatively regulates TNF-alpha- and IL-1beta-triggered NF-kappa-B activation by hydrolyzing 'Lys-27'- and 'Lys-63'-linked polyubiquitin chains from MAP3K7. Modulates also the protein level and aggregation of polyQ-expanded huntingtin/HTT through HSP90AA1. In Homo sapiens (Human), this protein is Ubiquitin carboxyl-terminal hydrolase 19 (USP19).